Consider the following 598-residue polypeptide: MKPAGTDPRILSLAAEVAKSPEQNVPVILLKLKEIINNTPLGSSELKKVKQDIYCYDLIQYCLLVLSQDSSRIQGGWSTISQLTQILSHCCVGLEPGEDGEEFYKELLPSAAENFLILGRRLQTCFINATKGEEQDKLLHFFQIVTDSLFWLLGGHVQLIQNVLQSDHFLHLLQTDNVQIGASVMTLLQNILQINSGNLLKIEGKALHSILDEILFKLLSTPSPVIRSTATKLLLVLAESHQEILILLRLSACYKGLRSLLNKQETLTEFSRELRQLVDLLTPKIHQEVEEQKLHKAACLIQAYWKGFQTRKRLKKLPSAVIALQRSFRSKRTKMMLELNRQKEEEDLRLKLQLQRQRAMRLSRESRLNMLEIIHPGQVEKYNREMEEKSALTIQKHWRGYRERKNFRQQRPSLTEYKAAVTLQRAVLKFLAKCRKKKKLFASWHGLQELTDARRVELKQQVDDYVKRHPCSQMSEAASRELHAQAQERLQHYFMGRAIEERAQQHREALMAQISTNIEQLMKAPSLKEAEGKEPEQFLSRSRPVAAKAKQAHLTTLKHIQAPWWKKLGEEPGDEVDVPKDELSIDLGMLFIGGTKPP.

The interaction with BBS1, BBS8 and BBS9 stretch occupies residues 1–157 (MKPAGTDPRI…SLFWLLGGHV (157 aa)). Positions 287–598 (QEVEEQKLHK…MLFIGGTKPP (312 aa)) are interaction with CEP290, BBS1, BBS2, BBS4, BBS5, BBS7, BBS8 and BBS9. IQ domains follow at residues 294–317 (LHKA…LKKL), 318–338 (PSAV…MMLE), 387–416 (EEKS…SLTE), and 417–437 (YKAA…CRKK). A coiled-coil region spans residues 336-362 (MLELNRQKEEEDLRLKLQLQRQRAMRL). An interaction with BBS1, BBS2, BBS4, BBS7, BBS8 and BBS9 region spans residues 530–598 (AEGKEPEQFL…MLFIGGTKPP (69 aa)).

As to quaternary structure, interacts with calmodulin. Interacts with CEP290/NPHP6; IQCB1/NPHP5 and CEP290/NPHP6; are proposed to form a functional NPHP5-6 module localized to the centrosome. Interacts with ATXN10. Interacts with NPHP1, INVS, NPHP4 and RPGRIP1L; these interactions likely require additional interactors. Associates with the BBSome complex; interacts with BBS1, BBS2, BBS4, BBS5, BBS7, BBS8 and BBS9. Localized to the outer segment and connecting cilia of photoreceptor cells.

It is found in the cytoplasm. Its subcellular location is the cytoskeleton. The protein localises to the microtubule organizing center. It localises to the centrosome. Functionally, involved in ciliogenesis. The function in an early step in cilia formation depends on its association with CEP290/NPHP6. Involved in regulation of the BBSome complex integrity, specifically for presence of BBS2 and BBS5 in the complex, and in ciliary targeting of selected BBSome cargos. May play a role in controlling entry of the BBSome complex to cilia possibly implicating CEP290/NPHP6. The sequence is that of IQ calmodulin-binding motif-containing protein 1 (Iqcb1) from Mus musculus (Mouse).